The sequence spans 324 residues: COP9 signalosome complex subunit 6 (324 aa).

Residues 38-171 enclose the MPN domain; that stretch reads VALHPLVILN…VSVFESVIDI (134 aa).

It belongs to the peptidase M67A family. CSN6 subfamily. As to quaternary structure, component of the CSN complex, composed of COPS1/GPS1, COPS2, COPS3, COPS4, COPS5, COPS6, COPS7 (COPS7A or COPS7B), COPS8 and COPS9. In the complex, it probably interacts directly with COPS2, COPS4, COPS5, COPS7 (COPS7A or COPS7B) and COPS9. Interacts with the translation initiation factor EIF3S6. Interacts weakly with RBX1. Directly interacts with COP1 and 14-3-3 protein sigma/SFN. Interacts with ERCC6.

It localises to the cytoplasm. The protein resides in the nucleus. Functionally, component of the COP9 signalosome complex (CSN), a complex involved in various cellular and developmental processes. The CSN complex is an essential regulator of the ubiquitin (Ubl) conjugation pathway by mediating the deneddylation of the cullin subunits of SCF-type E3 ligase complexes, leading to decrease the Ubl ligase activity of SCF-type complexes such as SCF, CSA or DDB2. The complex is also involved in phosphorylation of p53/TP53, c-jun/JUN, IkappaBalpha/NFKBIA, ITPK1 and IRF8, possibly via its association with CK2 and PKD kinases. CSN-dependent phosphorylation of TP53 and JUN promotes and protects degradation by the Ubl system, respectively. Has some glucocorticoid receptor-responsive activity. Stabilizes COP1 through reducing COP1 auto-ubiquitination and decelerating COP1 turnover rate, hence regulates the ubiquitination of COP1 targets, including SFN. The polypeptide is COP9 signalosome complex subunit 6 (COPS6) (Bos taurus (Bovine)).